A 112-amino-acid polypeptide reads, in one-letter code: MISDKIKLTAKDILEKEFKTGMRGYQQEEVDKFLDMIIKDYEAFHKEFEQLKQQNARLKRELEEQKLVATQVPQQPVVQTPVAQPVYNNTNTDILKRLSNLEKAVFGSKLYE.

A coiled-coil region spans residues 38–72; the sequence is IKDYEAFHKEFEQLKQQNARLKRELEEQKLVATQV.

The protein belongs to the GpsB family. Forms polymers through the coiled coil domains. Interacts with PBP1, MreC and EzrA.

The protein resides in the cytoplasm. Its function is as follows. Divisome component that associates with the complex late in its assembly, after the Z-ring is formed, and is dependent on DivIC and PBP2B for its recruitment to the divisome. Together with EzrA, is a key component of the system that regulates PBP1 localization during cell cycle progression. Its main role could be the removal of PBP1 from the cell pole after pole maturation is completed. Also contributes to the recruitment of PBP1 to the division complex. Not essential for septum formation. This is Cell cycle protein GpsB from Bacillus cereus (strain ZK / E33L).